A 460-amino-acid polypeptide reads, in one-letter code: V-type ATP synthase beta chain (460 aa).

This sequence belongs to the ATPase alpha/beta chains family.

Produces ATP from ADP in the presence of a proton gradient across the membrane. The V-type beta chain is a regulatory subunit. The sequence is that of V-type ATP synthase beta chain from Anaeromyxobacter sp. (strain Fw109-5).